The following is a 35-amino-acid chain: Beta/omega-theraphotoxin-Bp1a (35 aa).

Cystine bridges form between Cys2-Cys16, Cys9-Cys21, and Cys15-Cys28.

This sequence belongs to the neurotoxin 10 (Hwtx-1) family. 54 (ProTx-1) subfamily. In terms of processing, an unnatural amidation at Ser-35 provokes a 14-fold increased toxin ability to inhibit Nav1.2/SCN2A and a ~2-fold decreased toxin ability to inhibit both Nav1.5/SCN5A and Nav1.7/SCN9A. As to expression, expressed by the venom gland.

The protein resides in the secreted. Ion channel impairing toxin that inhibits voltage-gated calcium channel Cav3.1/CACNA1G (IC(50)=53 nM), voltage-gated potassium channels Kv2.1/KCNB1 (IC(50)=411 nM), all sodium channels tested (Nav1.2/SCN2A (IC(50)=60-104 nM), Nav1.5/SCN5A (IC(50)=76-358 nM), Nav1.6/SCN8A (IC(50)=21-133 nM), Nav1.7/SCN9A (IC(50)=51-95 nM), and Nav1.8/SCN10A) as well as the nociceptor cation channel TRPA1 (IC(50)=389 nM). Acts as a potent and selective blocker of voltage-gated calcium channel Cav3.1/CACNA1G, but not of Cav3.2/CACNA1H, and Cav3.3/CACNA1I. On Nav1.7/SCN9A, primarily interacts with the DII and DIV voltage-sensor domains. Also acts as an inhibitor of nociceptor cation channel TRPA1 (IC(50)~389 nM) by binding to the S1-S4 gating domain of TRPA1. It shows moderate affinity for lipid bilayers. The chain is Beta/omega-theraphotoxin-Bp1a from Bumba pulcherrimaklaasi (Tarantula spider).